The chain runs to 1935 residues: Rho GTPase-activating protein 21 (1935 aa).

The interval 1–46 (MATRRATVPEQQQQQPSSPGSEISKNKDGQEQSEMVSPTEEEGFCW) is disordered. The PDZ domain maps to 78–163 (HTTVKDEENG…TLELSVMPKD (86 aa)). Disordered regions lie at residues 212-237 (VEVPPSGTSLTKQQSSRPVRTATTQP), 339-373 (PPSYGGHSESMFSTRPSQAEESPSPTNHYASPGSH), 413-456 (QNTT…QERL), 673-718 (TSTS…DSNS), and 862-919 (NSKT…DVFS). Polar residues-rich tracts occupy residues 217 to 237 (SGTSLTKQQSSRPVRTATTQP), 348 to 373 (SMFSTRPSQAEESPSPTNHYASPGSH), and 413 to 429 (QNTTDYDQMLPNRSSGQ). Composition is skewed to low complexity over residues 441–451 (PQSVQMRQRSV) and 673–685 (TSTSASSSSPAHT). Residues 708–718 (SPEANAGDSNS) show a composition bias toward polar residues. The segment covering 863-884 (SKTERSKSCDEGLDDYKDEGKL) has biased composition (basic and acidic residues). Residues 920-1033 (DSNKEGFLYF…WIKAIQENGN (114 aa)) enclose the PH domain. The interval 1056–1126 (TMMSSSSNKS…KGSWRRIMKK (71 aa)) is disordered. The segment covering 1059 to 1072 (SSSSNKSEQSPKPS) has biased composition (low complexity). The span at 1097-1119 (PKQESERRLFSKDDISPPKDKGS) shows a compositional bias: basic and acidic residues. The 193-residue stretch at 1140-1332 (VRLDDCPPAH…TLIQQHDWFF (193 aa)) folds into the Rho-GAP domain. Disordered regions lie at residues 1341–1393 (ITAV…GSGK), 1411–1431 (RKRKKQRDKPQPSSSEDELDN), 1488–1510 (SEATSPCPPKLSEPPIVNHRLPP), 1525–1548 (SMSDSGTMLSTSSQASAQRSKPKV), 1637–1665 (HRSKVEEPTRNVQVNSEGSPSCTEGSITP), 1688–1733 (SIRQ…EPEE), and 1838–1925 (SELS…SGTQ). Residues 1345–1355 (QEESTVESQPV) show a composition bias toward polar residues. A compositionally biased stretch (low complexity) spans 1376–1393 (SDSASDSAKSKGSWGSGK). Polar residues-rich tracts occupy residues 1525 to 1543 (SMSDSGTMLSTSSQASAQR) and 1646 to 1662 (RNVQVNSEGSPSCTEGS). Positions 1691-1705 (QKTDSECSAESKNEE) are enriched in basic and acidic residues. Composition is skewed to polar residues over residues 1872-1889 (QVSTAIVTAGSESPSQGT) and 1898-1911 (NGDSFQSKNKNNFS).

The protein resides in the golgi apparatus membrane. Its subcellular location is the cell junction. It localises to the cytoplasmic vesicle membrane. It is found in the cytoplasm. The protein localises to the cytoskeleton. In terms of biological role, GTPase-activating protein (GAP) for rhoa and cdc42. This is Rho GTPase-activating protein 21 (arhgap21) from Xenopus tropicalis (Western clawed frog).